The primary structure comprises 389 residues: Aminomethyltransferase (389 aa).

It belongs to the GcvT family. As to quaternary structure, the glycine cleavage system is composed of four proteins: P, T, L and H.

It catalyses the reaction N(6)-[(R)-S(8)-aminomethyldihydrolipoyl]-L-lysyl-[protein] + (6S)-5,6,7,8-tetrahydrofolate = N(6)-[(R)-dihydrolipoyl]-L-lysyl-[protein] + (6R)-5,10-methylene-5,6,7,8-tetrahydrofolate + NH4(+). In terms of biological role, the glycine cleavage system catalyzes the degradation of glycine. This chain is Aminomethyltransferase, found in Corynebacterium jeikeium (strain K411).